The sequence spans 128 residues: Holo-[acyl-carrier-protein] synthase (128 aa).

2 residues coordinate Mg(2+): Asp-9 and Glu-56.

Belongs to the P-Pant transferase superfamily. AcpS family. Mg(2+) serves as cofactor.

It is found in the cytoplasm. The catalysed reaction is apo-[ACP] + CoA = holo-[ACP] + adenosine 3',5'-bisphosphate + H(+). Transfers the 4'-phosphopantetheine moiety from coenzyme A to a Ser of acyl-carrier-protein. The sequence is that of Holo-[acyl-carrier-protein] synthase from Pelagibacter ubique (strain HTCC1062).